We begin with the raw amino-acid sequence, 372 residues long: Innexin-16 (372 aa).

Transmembrane regions (helical) follow at residues 31–51, 106–126, 181–201, and 263–283; these read VVTTSILIAFSLLLFAKNYVG, VPFLLVIQALFFCVPRAFWII, LVMKLLILLNIVLQFFLLNSF, and IFIFLWFWFAFLLVATAGDFV. Asparagine 352 carries an N-linked (GlcNAc...) asparagine glycan.

The protein belongs to the pannexin family.

It localises to the cell membrane. The protein resides in the cell junction. The protein localises to the gap junction. In terms of biological role, structural component of the gap junctions. Required for signals downstream of defecation clock. This chain is Innexin-16 (inx-16), found in Caenorhabditis elegans.